Consider the following 306-residue polypeptide: Serine/threonine-protein kinase csk1 (306 aa).

Positions 11 to 306 (LTDIRHLTDG…KVSARLSQYA (296 aa)) constitute a Protein kinase domain. Residues 17-25 (LTDGTISEV) and K40 contribute to the ATP site. The active-site Proton acceptor is the D129.

The protein belongs to the protein kinase superfamily. CMGC Ser/Thr protein kinase family. CDC2/CDKX subfamily.

The catalysed reaction is L-seryl-[protein] + ATP = O-phospho-L-seryl-[protein] + ADP + H(+). It catalyses the reaction L-threonyl-[protein] + ATP = O-phospho-L-threonyl-[protein] + ADP + H(+). Functionally, acts as a CAK-activating kinase that specifically activates crk1 of the crk1-mcs2 CAK complex. The protein is Serine/threonine-protein kinase csk1 (csk1) of Schizosaccharomyces pombe (strain 972 / ATCC 24843) (Fission yeast).